Consider the following 389-residue polypeptide: MTNKTITLNLGPQHPATHGVLRLILEMDGEVVNNADPHIGLLHRGTEKLIEHKTYLQAIPYFDRLDYVSPMCQEHAFALAVESLLECSVPRRAQFIRVLFSELTRILNHTLNIGSQALDIGATTPLLWLFEEREKIMEFYERVSGSRMHSNYFRPGGVAEDLPENLLEDINKFIEQFPSKLNDIENLLNENRLWKQRLVDIGVVSQKDAMDWGFSGPMLRGSGIAWDLRKSNPYDVYDEMDFEVPIGKNGDCYDRYLVRILEMYESIKIIKQCIVKMPKGQVKTDDPKLTPPTRGKMKESMEAMIHHFKLYTEGYDVPIGETYKAVEAPKGEFGVYLYSQGGNKPYRCRIKAPGFAHLQGLNFMSKGHLIADVITIIATLDIVFGEIDR.

The protein belongs to the complex I 49 kDa subunit family. As to quaternary structure, NDH-1 is composed of 14 different subunits. Subunits NuoB, C, D, E, F, and G constitute the peripheral sector of the complex.

It is found in the cell inner membrane. It catalyses the reaction a quinone + NADH + 5 H(+)(in) = a quinol + NAD(+) + 4 H(+)(out). Its function is as follows. NDH-1 shuttles electrons from NADH, via FMN and iron-sulfur (Fe-S) centers, to quinones in the respiratory chain. The immediate electron acceptor for the enzyme in this species is believed to be ubiquinone. Couples the redox reaction to proton translocation (for every two electrons transferred, four hydrogen ions are translocated across the cytoplasmic membrane), and thus conserves the redox energy in a proton gradient. This is NADH-quinone oxidoreductase subunit D from Rickettsia prowazekii (strain Madrid E).